The sequence spans 781 residues: Arf-GAP with coiled-coil, ANK repeat and PH domain-containing protein 2 (781 aa).

Residues 1 to 226 (MKVTVDFEEC…MKDLGAQLDQ (226 aa)) form the BAR domain. The PH domain maps to 266 to 361 (GIVMEGYLFK…WIKAVQTSIA (96 aa)). A compositionally biased stretch (basic and acidic residues) spans 365–378 (REKGDESEKQEKKS). The disordered stretch occupies residues 365–390 (REKGDESEKQEKKSSPSTGSLESGSE). The segment covering 379 to 388 (SPSTGSLESG) has biased composition (low complexity). In terms of domain architecture, Arf-GAP spans 399–521 (ESALQRVQCI…KFVEKQPAAA (123 aa)). Residues 414-437 (CCDCGLADPRWASINLGITLCIEC) form a C4-type zinc finger. A disordered region spans residues 520-576 (AAVSPLESRTKVLPQSQEEKRHSAPEKSFLAIEQGAASPRVRSSDSGIQQSVDDSRE). 3 ANK repeats span residues 642 to 671 (NKAT…NVNI), 675 to 704 (KGRG…NQHA), and 708 to 737 (DGKD…NEEM).

It localises to the endosome membrane. Its subcellular location is the cell membrane. Its activity is regulated as follows. GAP activity stimulated by phosphatidylinositol 4,5-bisphosphate (PIP2) and phosphatidic acid. In terms of biological role, GTPase-activating protein (GAP) for ADP ribosylation factor 6 (ARF6). The chain is Arf-GAP with coiled-coil, ANK repeat and PH domain-containing protein 2 (ACAP2) from Gallus gallus (Chicken).